We begin with the raw amino-acid sequence, 98 residues long: N(2)-fixation sustaining protein CowN (98 aa).

The protein belongs to the CowN family.

In terms of biological role, is required to sustain N(2)-dependent growth in the presence of low levels of carbon monoxide (CO). Probably acts by protecting the N(2) fixation ability of the nitrogenase complex, which is inactivated in the presence of CO. This chain is N(2)-fixation sustaining protein CowN, found in Trichlorobacter lovleyi (strain ATCC BAA-1151 / DSM 17278 / SZ) (Geobacter lovleyi).